The sequence spans 636 residues: Molybdenum cofactor biosynthesis protein 1 (636 aa).

The segment at 1–383 is molybdenum cofactor biosynthesis protein A; it reads MAARPLSRML…QMKNRPMILI (383 aa). Phosphoserine is present on serine 64. The region spanning 64–277 is the Radical SAM core domain; that stretch reads SFGRQHSYLR…LDTVRQQWPE (214 aa). A GTP-binding site is contributed by arginine 73. The [4Fe-4S] cluster site is built by cysteine 80 and cysteine 84. Tyrosine 86 provides a ligand contact to S-adenosyl-L-methionine. Residue cysteine 87 participates in [4Fe-4S] cluster binding. Position 123 (arginine 123) interacts with GTP. Glycine 127 provides a ligand contact to S-adenosyl-L-methionine. Threonine 154 is a GTP binding site. S-adenosyl-L-methionine is bound at residue serine 178. At lysine 198 the chain carries N6-acetyllysine. Lysine 215 contacts GTP. Residue methionine 249 coordinates S-adenosyl-L-methionine. Positions 312 and 315 each coordinate [4Fe-4S] cluster. 317-319 serves as a coordination point for GTP; that stretch reads RLR. Cysteine 329 provides a ligand contact to [4Fe-4S] cluster. Residues 414 to 636 are molybdenum cofactor biosynthesis protein C; sequence MSFSSQVATL…GGQRGDFHRA (223 aa). Residues 456–480 form a disordered region; sequence DANSKCLSPGSWASAAPSGPQLTSE. Over residues 463 to 475 the composition is skewed to low complexity; it reads SPGSWASAAPSGP. Lysine 528 is subject to N6-acetyllysine. Aspartate 606 functions as the For molybdenum cofactor biosynthesis protein C activity in the catalytic mechanism.

The protein in the C-terminal section; belongs to the MoaC family. It in the N-terminal section; belongs to the radical SAM superfamily. MoaA family. As to quaternary structure, isoform MOCS1A and isoform MOCS1B probably form a heterooligomer. The cofactor is [4Fe-4S] cluster. As to expression, isoform MOCS1A and isoform 2 are widely expressed.

The catalysed reaction is GTP + AH2 + S-adenosyl-L-methionine = (8S)-3',8-cyclo-7,8-dihydroguanosine 5'-triphosphate + 5'-deoxyadenosine + L-methionine + A + H(+). The enzyme catalyses (8S)-3',8-cyclo-7,8-dihydroguanosine 5'-triphosphate = cyclic pyranopterin phosphate + diphosphate. Its pathway is cofactor biosynthesis; molybdopterin biosynthesis. Functionally, isoform MOCS1A and isoform MOCS1B probably form a complex that catalyzes the conversion of 5'-GTP to cyclic pyranopterin monophosphate (cPMP). MOCS1A catalyzes the cyclization of GTP to (8S)-3',8-cyclo-7,8-dihydroguanosine 5'-triphosphate and MOCS1B catalyzes the subsequent conversion of (8S)-3',8-cyclo-7,8-dihydroguanosine 5'-triphosphate to cPMP. The sequence is that of Molybdenum cofactor biosynthesis protein 1 (MOCS1) from Homo sapiens (Human).